The sequence spans 319 residues: Insulin gene enhancer protein ISL-2 (319 aa).

LIM zinc-binding domains follow at residues 1–43 (FLLR…CKRD) and 52–106 (CAQC…RADH). Disordered regions lie at residues 106–151 (HGPP…EKTT), 218–237 (QQHS…LVAG), and 286–319 (ESGS…PAET). A DNA-binding region (homeobox) is located at residues 150–209 (TTRVRTVLNEKQLHTLRTCYAANPRPDALMKEQLVEMTGLSPRVIRVWFQNKRCKDKKKS). Positions 218–230 (QQHSDKTSLQGLT) are enriched in polar residues. A compositionally biased stretch (low complexity) spans 286 to 303 (ESGSLGTSSGSDVTSLSS). The segment covering 304-319 (QLPDTPNSMVPSPAET) has biased composition (polar residues).

It is found in the nucleus. Transcriptional factor that defines subclasses of motoneurons that segregate into columns in the spinal cord and select distinct axon pathways. Acts in conjunction with LIM-1, LIM-3 and ISL-1. This Gallus gallus (Chicken) protein is Insulin gene enhancer protein ISL-2 (ISL2).